Here is a 346-residue protein sequence, read N- to C-terminus: Serpentine receptor class beta-11 (346 aa).

The next 7 membrane-spanning stretches (helical) occupy residues 26-46 (YQMI…LFKL), 57-77 (TIFI…LTTS), 102-122 (IWNF…CSVT), 139-159 (SVVM…CIIF), 186-206 (FTFF…DLIL), 239-259 (VFLI…VVFF), and 278-298 (TFST…SSFF).

It belongs to the nematode receptor-like protein srb family.

Its subcellular location is the membrane. In Caenorhabditis elegans, this protein is Serpentine receptor class beta-11 (srb-11).